We begin with the raw amino-acid sequence, 156 residues long: MLMSKKNRVMIYEYLFKEGVLVAKKDFHLPKHGEIDVPNLHVIRAMQSLVSRGYVKEQFCWRHYYWYLQNEGIQYLRDFLHLPPEIVPATLKRQTRPEAARPRPKEGAPRAQVGEDRAGYRRGFGGSDKKGEAGAGADTNFQFRGGFGRGRQEQEE.

Positions 91–156 (LKRQTRPEAA…FGRGRQEQEE (66 aa)) are disordered. The segment covering 95–119 (TRPEAARPRPKEGAPRAQVGEDRAG) has biased composition (basic and acidic residues).

This sequence belongs to the eukaryotic ribosomal protein eS10 family.

Its subcellular location is the cytoplasm. This Lumbricus rubellus (Humus earthworm) protein is Small ribosomal subunit protein eS10 (RPS10).